The primary structure comprises 783 residues: Putative ATP-dependent DNA helicase fml2 (783 aa).

The 169-residue stretch at 118–286 (FCEQALFHNL…KVVDCLHISK (169 aa)) folds into the Helicase ATP-binding domain. An ATP-binding site is contributed by 131–138 (LPTGLGKT). Positions 234 to 237 (DEAH) match the DEAH box motif. Residues 450–619 (KMNHLLELLK…GKKIALKKDV (170 aa)) form the Helicase C-terminal domain.

The protein belongs to the DEAD box helicase family. DEAH subfamily. FANCM sub-subfamily.

Its subcellular location is the nucleus. It is found in the nucleolus. The catalysed reaction is ATP + H2O = ADP + phosphate + H(+). The sequence is that of Putative ATP-dependent DNA helicase fml2 from Schizosaccharomyces pombe (strain 972 / ATCC 24843) (Fission yeast).